The following is a 341-amino-acid chain: Geranylfarnesyl diphosphate synthase (341 aa).

Isopentenyl diphosphate is bound by residues Lys47, Arg50, and Gln95. Asp102 and Asp106 together coordinate Mg(2+). Residue Arg111 coordinates an all-trans-polyprenyl diphosphate. Residue Arg112 participates in isopentenyl diphosphate binding. Lys193, Thr194, and Gln231 together coordinate an all-trans-polyprenyl diphosphate.

Belongs to the FPP/GGPP synthase family. As to quaternary structure, homodimer. It depends on Mg(2+) as a cofactor.

Its subcellular location is the cytoplasm. The catalysed reaction is isopentenyl diphosphate + (2E,6E,10E)-geranylgeranyl diphosphate = (2E,6E,10E,14E)-geranylfarnesyl diphosphate + diphosphate. In terms of biological role, probably involved in biosynthesis of the precursor for C25 (sesterterpanyl chain) moiety of C20-C25 diether (2-O-sesterterpanyl-3-O-phytanyl-sn-glycer) membrane lipid. Catalyzes the condensation of isopentenyl pyrophosphate with the allylic pyrophosphates to yield geranylfarnesyl diphosphate (GFPP). Geranylgeranyl diphosphate (GGPP) is the preferred substrate, but dimethylallyl diphosphate (DMAPP) and farnesyl diphosphate (FPP) can also be used as allylic substrate. The protein is Geranylfarnesyl diphosphate synthase (idsA3) of Natronomonas pharaonis (strain ATCC 35678 / DSM 2160 / CIP 103997 / JCM 8858 / NBRC 14720 / NCIMB 2260 / Gabara) (Halobacterium pharaonis).